The sequence spans 975 residues: Kinesin heavy chain (975 aa).

Positions 12–333 constitute a Kinesin motor domain; sequence SIKVVCRFRP…LDFGRRAKTV (322 aa). Residue 92 to 99 coordinates ATP; that stretch reads GQTSSGKT. The interval 180–321 is microtubule-binding; sequence VSSPEDVFEV…PASFNESETK (142 aa). A coiled-coil region spans residues 335-931; that stretch reads NVVCVNEELT…DRIKEAVRQK (597 aa). Positions 810-891 are necessary for associating with milt; sequence VAKELQTLHN…LPKLEKRLRC (82 aa). The segment at 932–975 is globular; that stretch reads HLGRRGPQAQIAKPIRSGQGAIAIRGGGAVGGPSPLAQVNPVNS.

The protein belongs to the TRAFAC class myosin-kinesin ATPase superfamily. Kinesin family. Kinesin subfamily. In terms of assembly, oligomer composed of two heavy chains and two light chains.

It is found in the cytoplasm. It localises to the cytoskeleton. Kinesin is a microtubule-associated force-producing protein that may play a role in organelle transport. Milt and Miro form an essential protein complex that links Khc to mitochondria for light chain-independent, anterograde transport of mitochondria. This Drosophila melanogaster (Fruit fly) protein is Kinesin heavy chain (Khc).